The primary structure comprises 329 residues: tRNA N6-adenosine threonylcarbamoyltransferase (329 aa).

Fe cation contacts are provided by H110 and H114. Residues 132–136 (VISGG), D165, G178, and N271 each bind substrate. Position 299 (D299) interacts with Fe cation.

It belongs to the KAE1 / TsaD family. Requires Fe(2+) as cofactor.

It is found in the cytoplasm. It catalyses the reaction L-threonylcarbamoyladenylate + adenosine(37) in tRNA = N(6)-L-threonylcarbamoyladenosine(37) in tRNA + AMP + H(+). In terms of biological role, required for the formation of a threonylcarbamoyl group on adenosine at position 37 (t(6)A37) in tRNAs that read codons beginning with adenine. Is involved in the transfer of the threonylcarbamoyl moiety of threonylcarbamoyl-AMP (TC-AMP) to the N6 group of A37, together with TsaE and TsaB. TsaD likely plays a direct catalytic role in this reaction. This is tRNA N6-adenosine threonylcarbamoyltransferase from Neorickettsia sennetsu (strain ATCC VR-367 / Miyayama) (Ehrlichia sennetsu).